Consider the following 533-residue polypeptide: MGSILSRRIAGVEDIDIQANSAYRYPPKSAGNYFASHFFMGGEKFDTPHPEGYLFGENMDLNFLGSRPVQFPYVTPAPHEPVKTLRSLVNIRKDSLRLVRYKDDTDSPTEDGEKPRVLYSLEFTFDADARVAITIYCQAVEEFVNGMTVYSCKNPSLQSETVHYKRGVSQQFSLPSFKIDFSEWKDDELNFDLDRGVFPVVIQAVVDEGDVVEVTGHAHVLLAAFEKHVDGSFSVKPLKQKQIVDRVSYLLQEIYGIENKNNQETKPSDDENSDNSSECVVCLSDLRDTLILPCRHLCLCTSCADTLRYQANNCPICRLPFRALLQIRAVRKKPGALSPISFSPVLAQSVDHDEHSNSDSVPPGYEPISLLEALNGLRAVSPAIPSAPLYEEITYSGISDGLSQASCPLAGLDRIIENGIQKGKTQSKSPDSTLRSPSSPIHEEDEEKLSEDPEAPLPPSGVELVLQESSSPESFGTEEVGEPSLKQGSRVPSIDDVLQDGSPQHHGCSQPVPPADIYLPALGPESCSVGIEE.

The N-myristoyl glycine moiety is linked to residue Gly-2. The segment at 278-317 (ECVVCLSDLRDTLILPCRHLCLCTSCADTLRYQANNCPIC) adopts an RING-type zinc-finger fold. The short motif at 385 to 388 (PSAP) is the Required for TSG101-binding element. Tyr-390 bears the Phosphotyrosine mark. Residues 421-519 (QKGKTQSKSP…QPVPPADIYL (99 aa)) form a disordered region. A compositionally biased stretch (polar residues) spans 423–439 (GKTQSKSPDSTLRSPSS). Phosphoserine occurs at positions 429, 450, and 502. Residues 443–454 (EEDEEKLSEDPE) are compositionally biased toward acidic residues.

In terms of assembly, interacts with MC1R and MC4R. Interacts with TSG101. Interacts with mislocalized cytosolically exposed PRNP; this interaction alters MGRN1 subcellular location and causes lysosomal enlargement. Autoubiquitinated in vitro.

The protein resides in the cytoplasm. Its subcellular location is the cytosol. The protein localises to the cell membrane. It localises to the early endosome. The catalysed reaction is S-ubiquitinyl-[E2 ubiquitin-conjugating enzyme]-L-cysteine + [acceptor protein]-L-lysine = [E2 ubiquitin-conjugating enzyme]-L-cysteine + N(6)-ubiquitinyl-[acceptor protein]-L-lysine.. Its pathway is protein modification; protein ubiquitination. Functionally, E3 ubiquitin-protein ligase. Mediates TSG101 monoubiquitination at multiple sites. Plays a role in the regulation of endosome-to-lysosome trafficking. Impairs MC1R- and MC4R-signaling by competing with GNAS-binding to MCRs and inhibiting agonist-induced cAMP production. Does not inhibit ADRB2-signaling. Does not promote MC1R ubiquitination. Also acts as a negative regulator of hedgehog signaling. The sequence is that of E3 ubiquitin-protein ligase MGRN1 (Mgrn1) from Rattus norvegicus (Rat).